A 788-amino-acid polypeptide reads, in one-letter code: Putative wall-associated receptor kinase-like 11 (788 aa).

Positions 1-27 (MRCDNNYSFSILFSLLLILILDSKVVS) are cleaved as a signal peptide. Topologically, residues 28 to 375 (LSTSCQSKSV…TFNCIGNKTR (348 aa)) are extracellular. Asn65, Asn80, Asn121, Asn159, Asn233, Asn253, Asn278, Asn295, and Asn310 each carry an N-linked (GlcNAc...) asparagine glycan. Residues 306–369 (CICNNVTISG…CVNLPGTFNC (64 aa)) form an atypical EGF-like region. 3 disulfides stabilise this stretch: Cys308–Cys321, Cys343–Cys360, and Cys354–Cys369. A glycan (N-linked (GlcNAc...) asparagine) is linked at Asn372. Residues 376–396 (VTMIGVGSAFGILVLVVGIWW) traverse the membrane as a helical segment. Over 397–788 (LRKFLKKRRM…QPLFPHPTWI (392 aa)) the chain is Cytoplasmic. One can recognise a Protein kinase domain in the interval 451–726 (FSESRILGQG…KVFTDLEKIL (276 aa)). ATP is bound by residues 457–465 (LGQGGQGTV) and Lys479. Tyr524 is modified (phosphotyrosine). Asp576 acts as the Proton acceptor in catalysis. Thr610 and Thr615 each carry phosphothreonine. At Tyr623 the chain carries Phosphotyrosine.

The protein belongs to the protein kinase superfamily. Ser/Thr protein kinase family.

Its subcellular location is the membrane. It catalyses the reaction L-seryl-[protein] + ATP = O-phospho-L-seryl-[protein] + ADP + H(+). The catalysed reaction is L-threonyl-[protein] + ATP = O-phospho-L-threonyl-[protein] + ADP + H(+). Putative serine/threonine-protein kinase that may function as a signaling receptor of extracellular matrix component. The chain is Putative wall-associated receptor kinase-like 11 (WAKL11) from Arabidopsis thaliana (Mouse-ear cress).